The chain runs to 265 residues: Type II pantothenate kinase (265 aa).

An ATP-binding site is contributed by 6-13 (DAGGTLIK). Glutamate 70 (proton acceptor) is an active-site residue. ATP contacts are provided by residues threonine 99, 121-125 (GGMIQ), tyrosine 137, and serine 225.

The protein belongs to the type II pantothenate kinase family. As to quaternary structure, homodimer.

It is found in the cytoplasm. The catalysed reaction is (R)-pantothenate + ATP = (R)-4'-phosphopantothenate + ADP + H(+). The protein operates within cofactor biosynthesis; coenzyme A biosynthesis; CoA from (R)-pantothenate: step 1/5. Functionally, catalyzes the phosphorylation of pantothenate (Pan), the first step in CoA biosynthesis. This chain is Type II pantothenate kinase, found in Staphylococcus saprophyticus subsp. saprophyticus (strain ATCC 15305 / DSM 20229 / NCIMB 8711 / NCTC 7292 / S-41).